Here is an 89-residue protein sequence, read N- to C-terminus: Cell division topological specificity factor (89 aa).

This sequence belongs to the MinE family.

In terms of biological role, prevents the cell division inhibition by proteins MinC and MinD at internal division sites while permitting inhibition at polar sites. This ensures cell division at the proper site by restricting the formation of a division septum at the midpoint of the long axis of the cell. The protein is Cell division topological specificity factor of Proteus mirabilis (strain HI4320).